Here is a 761-residue protein sequence, read N- to C-terminus: Elongation factor G, mitochondrial (761 aa).

Residues 1-42 (MSVQKMMWVPRKMVGGRIPFFTCSKVFSGFSRRSFHESPLAR) constitute a mitochondrion transit peptide. The tr-type G domain occupies 68-349 (NKLRNIGISA…AIVDYLPNPS (282 aa)). Residues 77-84 (AHIDSGKT), 148-152 (DTPGH), and 202-205 (NKMD) each bind GTP.

The protein belongs to the TRAFAC class translation factor GTPase superfamily. Classic translation factor GTPase family. EF-G/EF-2 subfamily. The precursor is processed in two steps involving mitochondrial intermediate peptidase (MIP) and mitochondrial processing peptidase (MPP).

The protein localises to the mitochondrion. It functions in the pathway protein biosynthesis; polypeptide chain elongation. Functionally, mitochondrial GTPase that catalyzes the GTP-dependent ribosomal translocation step during translation elongation. During this step, the ribosome changes from the pre-translocational (PRE) to the post-translocational (POST) state as the newly formed A-site-bound peptidyl-tRNA and P-site-bound deacylated tRNA move to the P and E sites, respectively. Catalyzes the coordinated movement of the two tRNA molecules, the mRNA and conformational changes in the ribosome. The polypeptide is Elongation factor G, mitochondrial (Saccharomyces cerevisiae (strain ATCC 204508 / S288c) (Baker's yeast)).